The following is a 481-amino-acid chain: ATP synthase subunit beta, chloroplastic (481 aa).

Position 162-169 (162-169 (GGAGVGKT)) interacts with ATP.

It belongs to the ATPase alpha/beta chains family. In terms of assembly, F-type ATPases have 2 components, F(1) - the catalytic core - and F(0) - the membrane proton channel. F(1) has five subunits: alpha(3), beta(3), gamma(1), delta(1), epsilon(1). F(0) has four main subunits: a(1), b(1), b'(1) and c(10-14). The alpha and beta chains form an alternating ring which encloses part of the gamma chain. F(1) is attached to F(0) by a central stalk formed by the gamma and epsilon chains, while a peripheral stalk is formed by the delta, b and b' chains.

It is found in the plastid. The protein localises to the chloroplast thylakoid membrane. It catalyses the reaction ATP + H2O + 4 H(+)(in) = ADP + phosphate + 5 H(+)(out). Its function is as follows. F(1)F(0) ATP synthase produces ATP from ADP in the presence of a proton or sodium gradient. F-type ATPases consist of two structural domains, F(1) containing the extramembraneous catalytic core and F(0) containing the membrane proton channel, linked together by a central stalk and a peripheral stalk. During catalysis, ATP synthesis in the catalytic domain of F(1) is coupled via a rotary mechanism of the central stalk subunits to proton translocation. Produces ATP from ADP in the presence of a proton gradient across the membrane. The catalytic sites are hosted primarily by the beta subunits. In Chlamydomonas reinhardtii (Chlamydomonas smithii), this protein is ATP synthase subunit beta, chloroplastic.